Here is a 1482-residue protein sequence, read N- to C-terminus: Glutamate receptor ionotropic, NMDA 2B (1482 aa).

A signal peptide spans 1 to 26; that stretch reads MKPSAECCSPKFWLVLAVLAVSGSKA. At 27 to 557 the chain is on the extracellular side; it reads RSQKSAPSIG…SAFLEPFSAD (531 aa). Asn-74 carries an N-linked (GlcNAc...) asparagine glycan. Residues Cys-86 and Cys-321 are joined by a disulfide bond. Residues His-127 and Glu-284 each coordinate Zn(2+). 4 N-linked (GlcNAc...) asparagine glycosylation sites follow: Asn-341, Asn-348, Asn-444, and Asn-491. 2 disulfides stabilise this stretch: Cys-429-Cys-456 and Cys-436-Cys-457. L-glutamate contacts are provided by Thr-514 and Arg-519. Asn-542 carries an N-linked (GlcNAc...) asparagine glycan. The chain crosses the membrane as a helical span at residues 558 to 576; sequence VWVMMFVMLLIVSAVAVFV. The Cytoplasmic portion of the chain corresponds to 577-603; the sequence is FEYFSPVGYNRCLADGREPGGPSFTIG. Positions 604 to 623 form an intramembrane region, discontinuously helical; that stretch reads KAIWLLWGLVFNNSVPVQNP. Positions 604–623 are pore-forming; the sequence is KAIWLLWGLVFNNSVPVQNP. Over 624–630 the chain is Cytoplasmic; it reads KGTTSKI. The chain crosses the membrane as a helical span at residues 631 to 646; sequence MVSVWAFFAVIFLASY. The Extracellular portion of the chain corresponds to 647-817; it reads TANLAAFMIQ…VMSSQLDIDN (171 aa). Asn-688 carries N-linked (GlcNAc...) asparagine glycosylation. L-glutamate contacts are provided by residues 690–691 and Asp-732; that span reads ST. Cys-746 and Cys-801 are oxidised to a cystine. Residues 818–837 traverse the membrane as a helical segment; the sequence is MAGVFYMLGAAMALSLITFI. The Cytoplasmic portion of the chain corresponds to 838 to 1482; sequence CEHLFYWQFR…EKLSSIESDV (645 aa). Residues Ser-882, Ser-886, Ser-917, and Ser-920 each carry the phosphoserine modification. Residues Tyr-962 and Tyr-1039 each carry the phosphotyrosine modification. Phosphoserine is present on residues Ser-1058, Ser-1061, and Ser-1064. A disordered region spans residues 1074 to 1097; that stretch reads EGNAAKRRKQQYKDSLKKRPASAK. Phosphotyrosine occurs at positions 1109 and 1133. Ser-1143 carries the phosphoserine modification. Position 1155 is a phosphotyrosine (Tyr-1155). The segment at 1162–1194 is disordered; it reads FKRDSVSGGGPCTNRSHLKHGTGDKHGVVGGVP. Phosphoserine occurs at positions 1255 and 1259. Residues 1266 to 1277 are compositionally biased toward low complexity; the sequence is PAAPVAVSSNAS. The segment at 1266 to 1301 is disordered; that stretch reads PAAPVAVSSNASTTKYPQSPTNSKAQKKNRNKLRRQ. Residues 1278–1289 show a composition bias toward polar residues; it reads TTKYPQSPTNSK. Residues 1290-1301 show a composition bias toward basic residues; it reads AQKKNRNKLRRQ. Residues 1292–1304 form an interaction with DAPK1 region; it reads KKNRNKLRRQHSY. Residue Ser-1303 is modified to Phosphoserine; by DAPK1. Tyr-1472 is modified (phosphotyrosine). Residues 1480–1482 carry the PDZ-binding motif; it reads SDV.

The protein belongs to the glutamate-gated ion channel (TC 1.A.10.1) family. NR2B/GRIN2B subfamily. In terms of assembly, heterotetramer. Forms heterotetrameric channels composed of two GluN1/zeta subunits (GRIN1), and two identical GluN2/epsilon subunits (GRIN2A, GRIN2B, GRIN2C or GRIN2D) or GluN3 subunits (GRIN3A or GRIN3B) (in vitro). Can also form heterotetrameric channels that contain at least two GluN1 subunits and at least two different GluN2 subunits (or a combination of one GluN2 and one GluN3 subunits) (in vitro). In vivo, the subunit composition may depend on the expression levels of the different subunits. Found in a complex with GRIN1, GRIN3A and PPP2CB. Interacts with MAGI3. Interacts with HIP1 and NETO1. Interacts with PDZ domains of PATJ, DLG3 and DLG4. Interacts with DAPK1. Found in a complex with GRIN1 and PRR7. Interacts with PRR7. Interacts with CAMK2A. Interacts with ARC; preventing ARC oligomerization. Interacts with TMEM25. Interacts (via the extreme C-terminus) with FRMPD2 (via the second PDZ domain); the interaction is direct and is likely to promote NMDAR-mediated neural signal transmission. GRIN2A binds FRMPD2 with lower affinity than GRIN2B. Interacts with FAM81A; the interaction facilitates condensate formation via liquid-liquid phase separation. Phosphorylated on tyrosine residues. Phosphorylation at Ser-1303 by DAPK1 enhances synaptic NMDA receptor channel activity. Detected in brain (at protein level). Detected throughout the brain, and in brain stem trigeminal nucleus. Detected in forebrain.

The protein resides in the cell membrane. It localises to the postsynaptic cell membrane. It is found in the cell projection. The protein localises to the dendrite. Its subcellular location is the late endosome. The protein resides in the lysosome. It localises to the cytoplasm. It is found in the cytoskeleton. The enzyme catalyses Ca(2+)(in) = Ca(2+)(out). It carries out the reaction Na(+)(in) = Na(+)(out). The catalysed reaction is K(+)(in) = K(+)(out). Component of N-methyl-D-aspartate (NMDA) receptors (NMDARs) that function as heterotetrameric, ligand-gated cation channels with high calcium permeability and voltage-dependent block by Mg(2+). Participates in synaptic plasticity for learning and memory formation by contributing to the long-term depression (LTD) of hippocampus membrane currents. Channel activation requires binding of the neurotransmitter L-glutamate to the GluN2 subunit, glycine or D-serine binding to the GluN1 subunit, plus membrane depolarization to eliminate channel inhibition by Mg(2+). NMDARs mediate simultaneously the potasium efflux and the influx of calcium and sodium. Each GluN2 subunit confers differential attributes to channel properties, including activation, deactivation and desensitization kinetics, pH sensitivity, Ca2(+) permeability, and binding to allosteric modulators. In concert with DAPK1 at extrasynaptic sites, acts as a central mediator for stroke damage. Its phosphorylation at Ser-1303 by DAPK1 enhances synaptic NMDA receptor channel activity inducing injurious Ca2+ influx through them, resulting in an irreversible neuronal death. This Mus musculus (Mouse) protein is Glutamate receptor ionotropic, NMDA 2B.